We begin with the raw amino-acid sequence, 188 residues long: Elongation factor P (188 aa).

The protein belongs to the elongation factor P family.

It localises to the cytoplasm. Its pathway is protein biosynthesis; polypeptide chain elongation. In terms of biological role, involved in peptide bond synthesis. Stimulates efficient translation and peptide-bond synthesis on native or reconstituted 70S ribosomes in vitro. Probably functions indirectly by altering the affinity of the ribosome for aminoacyl-tRNA, thus increasing their reactivity as acceptors for peptidyl transferase. The sequence is that of Elongation factor P from Bradyrhizobium diazoefficiens (strain JCM 10833 / BCRC 13528 / IAM 13628 / NBRC 14792 / USDA 110).